Here is a 207-residue protein sequence, read N- to C-terminus: 8-oxoguanine DNA glycosylase/AP lyase (207 aa).

Active-site residues include lysine 128 and aspartate 146.

It belongs to the type-2 OGG1 family.

The catalysed reaction is 2'-deoxyribonucleotide-(2'-deoxyribose 5'-phosphate)-2'-deoxyribonucleotide-DNA = a 3'-end 2'-deoxyribonucleotide-(2,3-dehydro-2,3-deoxyribose 5'-phosphate)-DNA + a 5'-end 5'-phospho-2'-deoxyribonucleoside-DNA + H(+). Functionally, catalyzes the excision of an oxidatively damaged form of guanine (7,8-dihydro-8-oxoguanine = 8-oxoG) from DNA. Also cleaves the DNA backbone at apurinic/apyrimidinic sites (AP sites). The protein is 8-oxoguanine DNA glycosylase/AP lyase of Saccharolobus islandicus (strain L.S.2.15 / Lassen #1) (Sulfolobus islandicus).